The following is a 143-amino-acid chain: AP-2 complex subunit sigma (143 aa).

This sequence belongs to the adaptor complexes small subunit family. Adaptor protein complex 2 (AP-2) is a heterotetramer composed of two large adaptins (alpha-type subunit APL3 and beta-type subunit APL1), a medium chain (mu-type subunit APM4) and a small adaptin (sigma-type subunit APS2).

The protein resides in the cell membrane. It localises to the membrane. The protein localises to the coated pit. In terms of biological role, component of the adaptor complexes which link clathrin to receptors in coated vesicles. Clathrin-associated protein complexes are believed to interact with the cytoplasmic tails of membrane proteins, leading to their selection and concentration. The polypeptide is AP-2 complex subunit sigma (APS2) (Gibberella zeae (strain ATCC MYA-4620 / CBS 123657 / FGSC 9075 / NRRL 31084 / PH-1) (Wheat head blight fungus)).